We begin with the raw amino-acid sequence, 136 residues long: MSERTLVLVKPDGVERGLVGEVIGRIERKGLKLVALELRQVEQQLAEQHYAEHDGKPFFGSLLEFITSGPVVAAVVEGPRAISAFRQLAGGTDPVDKAAPGSIRGDYGLEVQYNLVHGSDSAESAEREIKLWFPEL.

ATP is bound by residues lysine 10, phenylalanine 58, arginine 86, threonine 92, arginine 104, and asparagine 114. Histidine 117 serves as the catalytic Pros-phosphohistidine intermediate.

The protein belongs to the NDK family. As to quaternary structure, homotetramer. The cofactor is Mg(2+).

The protein resides in the cytoplasm. It catalyses the reaction a 2'-deoxyribonucleoside 5'-diphosphate + ATP = a 2'-deoxyribonucleoside 5'-triphosphate + ADP. It carries out the reaction a ribonucleoside 5'-diphosphate + ATP = a ribonucleoside 5'-triphosphate + ADP. Functionally, major role in the synthesis of nucleoside triphosphates other than ATP. The ATP gamma phosphate is transferred to the NDP beta phosphate via a ping-pong mechanism, using a phosphorylated active-site intermediate. This chain is Nucleoside diphosphate kinase, found in Saccharopolyspora erythraea (strain ATCC 11635 / DSM 40517 / JCM 4748 / NBRC 13426 / NCIMB 8594 / NRRL 2338).